A 76-amino-acid polypeptide reads, in one-letter code: uncharacterized protein (76 aa).

The required for interaction with PPP3CA stretch occupies residues 36-41; it reads PDIIIT. A phosphothreonine mark is found at threonine 44 and threonine 46.

As to quaternary structure, interacts (via PxIxIT motif, when phosphorylated on Thr-44) with PPP3CA. Not expressed in pancreatic duct cells (at protein level). Abundantly expressed in the pancreas and weakly expressed in the thyroid. As to expression, not expressed in pancreatic duct cells (at protein level). Abundantly expressed in the lymph node and weakly expressed in the stomach, trachea and bone marrow.

This is an uncharacterized protein from Homo sapiens (Human).